A 302-amino-acid polypeptide reads, in one-letter code: FeMo cofactor biosynthesis protein NifB (302 aa).

Positions 22–264 constitute a Radical SAM core domain; sequence HDKYGRVHLP…PQFRACGQCR (243 aa). [4Fe-4S] cluster is bound by residues Cys36, Cys40, and Cys43. S-adenosyl-L-methionine contacts are provided by Gly91, Thr142, and Ile194. The [4Fe-4S] cluster site is built by Cys260 and Cys263.

Belongs to the radical SAM superfamily. NifB family. Monomer. Requires [4Fe-4S] cluster as cofactor.

The protein operates within cofactor biosynthesis; Fe-Mo cofactor biosynthesis. Functionally, involved in the biosynthesis of the iron-molybdenum cofactor (FeMo-co or M-cluster) found in the dinitrogenase enzyme of the nitrogenase complex in nitrogen-fixing microorganisms. NifB catalyzes the crucial step of radical SAM-dependent carbide insertion that occurs concomitant with the insertion of a 9th sulfur and the rearrangement/coupling of two [4Fe-4S] clusters into a [8Fe-9S-C] cluster, the precursor to the M-cluster. In Methanocaldococcus infernus (strain DSM 11812 / JCM 15783 / ME), this protein is FeMo cofactor biosynthesis protein NifB.